We begin with the raw amino-acid sequence, 78 residues long: Major outer membrane lipoprotein Lpp (78 aa).

The signal sequence occupies residues 1–20 (MNRTKLVLGAVILGSTLLAG). Cysteine 21 is lipidated: N-palmitoyl cysteine. The S-diacylglycerol cysteine moiety is linked to residue cysteine 21. A coiled-coil region spans residues 22–75 (SSNAKIDQLSTDVQTLNAKVDQLSNDVTAIRSDVQAAKDDAARANQRLDNQAHS). 2 consecutive repeats follow at residues 24 to 34 (NAKIDQLSTDV) and 38 to 48 (NAKVDQLSNDV). The residue at position 78 (lysine 78) is an N6-murein peptidoglycan lysine.

Belongs to the Lpp family. As to quaternary structure, homotrimer.

It is found in the cell outer membrane. The protein localises to the secreted. Its subcellular location is the cell wall. Its function is as follows. A highly abundant outer membrane lipoprotein that controls the distance between the inner and outer membranes. The only protein known to be covalently linked to the peptidoglycan network (PGN). Also non-covalently binds the PGN. The link between the cell outer membrane and PGN contributes to maintenance of the structural and functional integrity of the cell envelope, and maintains the correct distance between the PGN and the outer membrane. This is Major outer membrane lipoprotein Lpp from Erwinia amylovora (Fire blight bacteria).